The primary structure comprises 201 residues: Lipopolysaccharide core heptose(II)-phosphate phosphatase (201 aa).

The signal sequence occupies residues 1 to 35; sequence MLAFTLRFIKNKRYLATLAGALVIIAGLTSQHAWS.

It belongs to the phosphoglycerate mutase family. Ais subfamily.

It is found in the periplasm. Its pathway is bacterial outer membrane biogenesis; lipopolysaccharide metabolism. Its function is as follows. Catalyzes the dephosphorylation of heptose(II) of the outer membrane lipopolysaccharide core. This is Lipopolysaccharide core heptose(II)-phosphate phosphatase from Salmonella heidelberg (strain SL476).